Reading from the N-terminus, the 1065-residue chain is Outer capsid protein VP3 (1065 aa).

It is found in the virion. It catalyses the reaction a 5'-end diphospho-ribonucleoside in mRNA + GTP + H(+) = a 5'-end (5'-triphosphoguanosine)-ribonucleoside in mRNA + diphosphate. The enzyme catalyses a 5'-end (5'-triphosphoguanosine)-ribonucleoside in mRNA + S-adenosyl-L-methionine = a 5'-end (N(7)-methyl 5'-triphosphoguanosine)-ribonucleoside in mRNA + S-adenosyl-L-homocysteine. Functionally, outer capsid protein involved in mRNA capping. Catalyzes the last 3 enzymatic activities for formation of the 5' cap structure on the viral plus-strand transcripts, namely the RNA guanylyltransferase, RNA-7N- and RNA-2'O-methyltransferase activities. The polypeptide is Outer capsid protein VP3 (S3) (Cryphonectria parasitica mycoreovirus 1 (strain 9B21) (CpMYRV-1)).